The following is an 85-amino-acid chain: Small ribosomal subunit protein uS17 (85 aa).

This sequence belongs to the universal ribosomal protein uS17 family. In terms of assembly, part of the 30S ribosomal subunit.

In terms of biological role, one of the primary rRNA binding proteins, it binds specifically to the 5'-end of 16S ribosomal RNA. The protein is Small ribosomal subunit protein uS17 of Anaeromyxobacter dehalogenans (strain 2CP-1 / ATCC BAA-258).